We begin with the raw amino-acid sequence, 1006 residues long: DNA polymerase (1006 aa).

Belongs to the DNA polymerase type-B family. As to quaternary structure, interacts with OPG148/A20. Component of the Uracil-DNA glycosylase(UDG)-OPG148/A20-polymerase complex; OPG148/A20 and OPG116/UDG form a heterodimeric processivity factor that associates with OPG071/E9 to form the processive polymerase holoenzyme.

The catalysed reaction is DNA(n) + a 2'-deoxyribonucleoside 5'-triphosphate = DNA(n+1) + diphosphate. In terms of biological role, catalyzes DNA synthesis. Acquires processivity by associating with a heterodimeric processivity factor comprised of the viral OPG148/A20 and OPG116/D4 proteins, thereby forming the DNA polymerase holoenzyme. Displays 3'- to 5' exonuclease activity. Might participate in viral DNA recombination. Does not perform OPG116/D4synthesis across an abasic site. The chain is DNA polymerase (OPG071) from Bos taurus (Bovine).